The primary structure comprises 145 residues: MYPAHLLVLLAVCVSLLGASDIPPQPLNLVQFSSMIQCANHGRRPTSNYMDYGCYCGKGGSGTPVDELDRCCKIHDDCYGEAEKSQKCAPYWTWYTWKCGSDGPQCDDSKTGCQRFVCDCDATAAKCFAKAPYNKENYNIKTRCQ.

A signal peptide spans methionine 1–alanine 19. Positions serine 20–leucine 27 are excised as a propeptide. Disulfide bonds link cysteine 38-cysteine 99, cysteine 54-cysteine 144, cysteine 56-cysteine 72, cysteine 71-cysteine 127, cysteine 78-cysteine 120, cysteine 88-cysteine 113, and cysteine 106-cysteine 118. Positions 55, 57, and 59 each coordinate Ca(2+). Histidine 75 is an active-site residue. Aspartate 76 is a Ca(2+) binding site. Aspartate 121 is an active-site residue.

This sequence belongs to the phospholipase A2 family. Group I subfamily. D49 sub-subfamily. The cofactor is Ca(2+). Expressed by the venom gland.

The protein localises to the secreted. The catalysed reaction is a 1,2-diacyl-sn-glycero-3-phosphocholine + H2O = a 1-acyl-sn-glycero-3-phosphocholine + a fatty acid + H(+). Functionally, snake venom phospholipase A2 (PLA2) that inhibits collagen-induced platelet aggregation. PLA2 catalyzes the calcium-dependent hydrolysis of the 2-acyl groups in 3-sn-phosphoglycerides. This Austrelaps superbus (Lowland copperhead snake) protein is Basic phospholipase A2 S6-45.